We begin with the raw amino-acid sequence, 332 residues long: Ketol-acid reductoisomerase (NADP(+)) (332 aa).

Positions 1-182 (MAQTWKDTDI…GSARAGLIKT (182 aa)) constitute a KARI N-terminal Rossmann domain. Residues 25–28 (YGIQ), Lys48, Ser53, and 83–86 (DMIQ) contribute to the NADP(+) site. His108 is an active-site residue. Residue Gly134 coordinates NADP(+). The KARI C-terminal knotted domain occupies 183–329 (AFKEEVETDW…KEMRKMMWPD (147 aa)). Mg(2+)-binding residues include Asp191, Glu195, Glu227, and Glu231. Residue Ser252 participates in substrate binding.

It belongs to the ketol-acid reductoisomerase family. Mg(2+) serves as cofactor.

It carries out the reaction (2R)-2,3-dihydroxy-3-methylbutanoate + NADP(+) = (2S)-2-acetolactate + NADPH + H(+). The catalysed reaction is (2R,3R)-2,3-dihydroxy-3-methylpentanoate + NADP(+) = (S)-2-ethyl-2-hydroxy-3-oxobutanoate + NADPH + H(+). The protein operates within amino-acid biosynthesis; L-isoleucine biosynthesis; L-isoleucine from 2-oxobutanoate: step 2/4. It participates in amino-acid biosynthesis; L-valine biosynthesis; L-valine from pyruvate: step 2/4. Involved in the biosynthesis of branched-chain amino acids (BCAA). Catalyzes an alkyl-migration followed by a ketol-acid reduction of (S)-2-acetolactate (S2AL) to yield (R)-2,3-dihydroxy-isovalerate. In the isomerase reaction, S2AL is rearranged via a Mg-dependent methyl migration to produce 3-hydroxy-3-methyl-2-ketobutyrate (HMKB). In the reductase reaction, this 2-ketoacid undergoes a metal-dependent reduction by NADPH to yield (R)-2,3-dihydroxy-isovalerate. The chain is Ketol-acid reductoisomerase (NADP(+)) from Nitrosopumilus maritimus (strain SCM1).